Here is a 932-residue protein sequence, read N- to C-terminus: DNA mismatch repair protein MutS (932 aa).

Residues 1-13 (MTTDTDTDVDAGT) show a composition bias toward acidic residues. The disordered stretch occupies residues 1–26 (MTTDTDTDVDAGTDLEPQPEGPPEKM). 648–655 (GPNMSGKS) contributes to the ATP binding site. The interval 865-892 (NQQNQASDDDEIARSPRGADTNTDAGIN) is disordered.

Belongs to the DNA mismatch repair MutS family.

This protein is involved in the repair of mismatches in DNA. It is possible that it carries out the mismatch recognition step. This protein has a weak ATPase activity. The chain is DNA mismatch repair protein MutS from Haloquadratum walsbyi (strain DSM 16790 / HBSQ001).